A 555-amino-acid polypeptide reads, in one-letter code: Glutamine--tRNA ligase (555 aa).

Residues 34-44 carry the 'HIGH' region motif; sequence PEPNGYLHIGH. Residues 35 to 37 and 41 to 47 each bind ATP; these read EPN and HIGHAKS. Positions 67 and 212 each coordinate L-glutamine. Residues threonine 231, 261 to 262, and 269 to 271 each bind ATP; these read RL and MSK. The 'KMSKS' region signature appears at 268–272; that stretch reads VMSKR.

It belongs to the class-I aminoacyl-tRNA synthetase family. In terms of assembly, monomer.

The protein resides in the cytoplasm. It catalyses the reaction tRNA(Gln) + L-glutamine + ATP = L-glutaminyl-tRNA(Gln) + AMP + diphosphate. This is Glutamine--tRNA ligase from Proteus mirabilis (strain HI4320).